A 207-amino-acid chain; its full sequence is Thiamine-phosphate synthase (207 aa).

4-amino-2-methyl-5-(diphosphooxymethyl)pyrimidine is bound by residues Q41–K45 and N73. Positions 74 and 93 each coordinate Mg(2+). Position 111 (T111) interacts with 4-amino-2-methyl-5-(diphosphooxymethyl)pyrimidine. T138–T140 is a binding site for 2-[(2R,5Z)-2-carboxy-4-methylthiazol-5(2H)-ylidene]ethyl phosphate. K141 contacts 4-amino-2-methyl-5-(diphosphooxymethyl)pyrimidine. G168 is a 2-[(2R,5Z)-2-carboxy-4-methylthiazol-5(2H)-ylidene]ethyl phosphate binding site.

It belongs to the thiamine-phosphate synthase family. Requires Mg(2+) as cofactor.

It carries out the reaction 2-[(2R,5Z)-2-carboxy-4-methylthiazol-5(2H)-ylidene]ethyl phosphate + 4-amino-2-methyl-5-(diphosphooxymethyl)pyrimidine + 2 H(+) = thiamine phosphate + CO2 + diphosphate. The enzyme catalyses 2-(2-carboxy-4-methylthiazol-5-yl)ethyl phosphate + 4-amino-2-methyl-5-(diphosphooxymethyl)pyrimidine + 2 H(+) = thiamine phosphate + CO2 + diphosphate. The catalysed reaction is 4-methyl-5-(2-phosphooxyethyl)-thiazole + 4-amino-2-methyl-5-(diphosphooxymethyl)pyrimidine + H(+) = thiamine phosphate + diphosphate. The protein operates within cofactor biosynthesis; thiamine diphosphate biosynthesis; thiamine phosphate from 4-amino-2-methyl-5-diphosphomethylpyrimidine and 4-methyl-5-(2-phosphoethyl)-thiazole: step 1/1. Its function is as follows. Condenses 4-methyl-5-(beta-hydroxyethyl)thiazole monophosphate (THZ-P) and 2-methyl-4-amino-5-hydroxymethyl pyrimidine pyrophosphate (HMP-PP) to form thiamine monophosphate (TMP). This chain is Thiamine-phosphate synthase, found in Pelagibacter ubique (strain HTCC1062).